The chain runs to 148 residues: Nodulation protein NolJ (148 aa).

The span at 66-78 shows a compositional bias: acidic residues; that stretch reads ADEAMEETEEDAD. 2 disordered regions span residues 66–93 and 124–148; these read ADEA…VSDG and AAKG…RGYG. Residues 124-136 are compositionally biased toward low complexity; sequence AAKGAGAAVPGPN.

Involved in efficiency of soybean nodulation and in nodulation delay. The protein is Nodulation protein NolJ (nolJ) of Rhizobium fredii (Sinorhizobium fredii).